We begin with the raw amino-acid sequence, 224 residues long: Phosphoribosylformylglycinamidine synthase subunit PurQ (224 aa).

A Glutamine amidotransferase type-1 domain is found at 4 to 224 (RIGIITFPGT…YSVLDGVLAG (221 aa)). Catalysis depends on Cys-87, which acts as the Nucleophile. Residues His-195 and Glu-197 contribute to the active site.

As to quaternary structure, part of the FGAM synthase complex composed of 1 PurL, 1 PurQ and 2 PurS subunits.

It is found in the cytoplasm. The catalysed reaction is N(2)-formyl-N(1)-(5-phospho-beta-D-ribosyl)glycinamide + L-glutamine + ATP + H2O = 2-formamido-N(1)-(5-O-phospho-beta-D-ribosyl)acetamidine + L-glutamate + ADP + phosphate + H(+). It catalyses the reaction L-glutamine + H2O = L-glutamate + NH4(+). It functions in the pathway purine metabolism; IMP biosynthesis via de novo pathway; 5-amino-1-(5-phospho-D-ribosyl)imidazole from N(2)-formyl-N(1)-(5-phospho-D-ribosyl)glycinamide: step 1/2. Functionally, part of the phosphoribosylformylglycinamidine synthase complex involved in the purines biosynthetic pathway. Catalyzes the ATP-dependent conversion of formylglycinamide ribonucleotide (FGAR) and glutamine to yield formylglycinamidine ribonucleotide (FGAM) and glutamate. The FGAM synthase complex is composed of three subunits. PurQ produces an ammonia molecule by converting glutamine to glutamate. PurL transfers the ammonia molecule to FGAR to form FGAM in an ATP-dependent manner. PurS interacts with PurQ and PurL and is thought to assist in the transfer of the ammonia molecule from PurQ to PurL. The protein is Phosphoribosylformylglycinamidine synthase subunit PurQ of Mycolicibacterium paratuberculosis (strain ATCC BAA-968 / K-10) (Mycobacterium paratuberculosis).